The following is a 632-amino-acid chain: MAKIKKRGESGAAKNYVTRNQALKKLQISLSDFRRLCILKGIYPREPLNKKRANKGSSAPASFYYHKDIQYLLHEPLLVKFREHKAFAKKLARAIGRQEWGLAKNLEDAKPVARLDHLVRERYPTFTLALQDLQDPLNLVHLFSTLPTNPIPGKTLVPSEVIAECSRLISEWKLWAIRTHSLRKMFLGIKGVYYECEVPGQGGEPVRVRWLEGFEFQQHVPHDVDFRILLTFLDLYRTMVGFVLFKLYTDENLVYPPPLDVELDEQGESVGAFKLVERKAAEGADGKTQVSKKAVRKAIKGIKAAGDDADVDMDEGAKETDEEEDEDFVERPSKAQEVDDVASAPLTTYNSLLATSSTPARQNLLFSPYTFYLSRETSSRTWEFVVRAMGGKVITSLTAPTPADAPNADSITHVIIDRPITVERMREMEAGRKWVWIQPQWVADCVNKQKIISSEGYGPGQLLPPHLSPWDGEGELYRPWLEEQGEKAAEGQEGEEEEEAAEQDEGESEDEEEDGKEEVAAEYPPALLAAAQNPSDASLLHAAELEAETNGVSHSAFRAQLKEATKVHAKKVPASQKEKKGEEDLRKIMMSNKKAKLYEKMQYSNREKAAEKEKLEKKRKAIEKRKAKEAKA.

The disordered stretch occupies residues 306 to 341 (GDDADVDMDEGAKETDEEEDEDFVERPSKAQEVDDV). Positions 307 to 328 (DDADVDMDEGAKETDEEEDEDF) are enriched in acidic residues. The BRCT domain occupies 361 to 459 (RQNLLFSPYT…KIISSEGYGP (99 aa)). Disordered stretches follow at residues 485 to 535 (GEKA…QNPS), 565 to 585 (TKVH…EEDL), and 601 to 632 (MQYS…EAKA). The span at 492-516 (QEGEEEEEAAEQDEGESEDEEEDGK) shows a compositional bias: acidic residues. The segment covering 521–531 (AEYPPALLAAA) has biased composition (low complexity). 2 stretches are compositionally biased toward basic and acidic residues: residues 576 to 585 (QKEKKGEEDL) and 605 to 616 (NREKAAEKEKLE). Residues 595–632 (AKLYEKMQYSNREKAAEKEKLEKKRKAIEKRKAKEAKA) adopt a coiled-coil conformation.

This sequence belongs to the pescadillo family. As to quaternary structure, component of the NOP7 complex, composed of ERB1, NOP7 and YTM1. The complex is held together by ERB1, which interacts with NOP7 via its N-terminal domain and with YTM1 via a high-affinity interaction between the seven-bladed beta-propeller domains of the 2 proteins. The NOP7 complex associates with the 66S pre-ribosome.

The protein localises to the nucleus. The protein resides in the nucleolus. It is found in the nucleoplasm. Its function is as follows. Component of the NOP7 complex, which is required for maturation of the 25S and 5.8S ribosomal RNAs and formation of the 60S ribosome. In Cryptococcus neoformans var. neoformans serotype D (strain B-3501A) (Filobasidiella neoformans), this protein is Pescadillo homolog.